We begin with the raw amino-acid sequence, 229 residues long: Wtf element wtf14 (229 aa).

Basic and acidic residues predominate over residues 1–26 (MENNHHLAKDSLDELNPKRGKGEHET). The tract at residues 1–27 (MENNHHLAKDSLDELNPKRGKGEHETQ) is disordered. 4 consecutive transmembrane segments (helical) span residues 71–91 (IPAVLLPVFVINIALFKYLVF), 100–120 (VLFGLGNGGINIFSMWLLLAT), 151–171 (LYAILKLTFVNAFAIPLLMFF), and 188–208 (VIGVMLNVAYFIIEIENPGLF).

The protein belongs to the WTF family.

The protein localises to the endoplasmic reticulum membrane. May act in meiotic drive. In Schizosaccharomyces kambucha (Fission yeast), this protein is Wtf element wtf14.